The following is a 432-amino-acid chain: Adenylosuccinate synthetase (432 aa).

Residues 13–19 and 41–43 each bind GTP; these read GDEGKGK and GHT. Aspartate 14 serves as the catalytic Proton acceptor. The Mg(2+) site is built by aspartate 14 and glycine 41. Residues 14–17, 39–42, threonine 130, arginine 144, glutamine 225, threonine 240, and arginine 304 contribute to the IMP site; these read DEGK and NAGH. The Proton donor role is filled by histidine 42. Residue 300-306 coordinates substrate; it reads ATTGRKR. GTP-binding positions include arginine 306, 332 to 334, and 415 to 417; these read KLD and STG.

The protein belongs to the adenylosuccinate synthetase family. As to quaternary structure, homodimer. It depends on Mg(2+) as a cofactor.

The protein resides in the cytoplasm. It catalyses the reaction IMP + L-aspartate + GTP = N(6)-(1,2-dicarboxyethyl)-AMP + GDP + phosphate + 2 H(+). The protein operates within purine metabolism; AMP biosynthesis via de novo pathway; AMP from IMP: step 1/2. Plays an important role in the de novo pathway of purine nucleotide biosynthesis. Catalyzes the first committed step in the biosynthesis of AMP from IMP. The sequence is that of Adenylosuccinate synthetase from Vibrio cholerae serotype O1 (strain M66-2).